The primary structure comprises 83 residues: Apolipoprotein C-I, basic form (83 aa).

The first 26 residues, 1-26, serve as a signal peptide directing secretion; sequence MRLFLSLPVLVVVLSIVLEGPAPAQG.

It belongs to the apolipoprotein C1 family.

The protein localises to the secreted. In terms of biological role, inhibitor of lipoprotein binding to the low density lipoprotein (LDL) receptor, LDL receptor-related protein, and very low density lipoprotein (VLDL) receptor. Associates with high density lipoproteins (HDL) and the triacylglycerol-rich lipoproteins in the plasma and makes up about 10% of the protein of the VLDL and 2% of that of HDL. Appears to interfere directly with fatty acid uptake and is also the major plasma inhibitor of cholesteryl ester transfer protein (CETP). Binds free fatty acids and reduces their intracellular esterification. Modulates the interaction of APOE with beta-migrating VLDL and inhibits binding of beta-VLDL to the LDL receptor-related protein. This is Apolipoprotein C-I, basic form (APOC1B) from Pan troglodytes (Chimpanzee).